The sequence spans 184 residues: Large ribosomal subunit protein uL6 (184 aa).

It belongs to the universal ribosomal protein uL6 family. In terms of assembly, part of the 50S ribosomal subunit.

In terms of biological role, this protein binds to the 23S rRNA, and is important in its secondary structure. It is located near the subunit interface in the base of the L7/L12 stalk, and near the tRNA binding site of the peptidyltransferase center. This is Large ribosomal subunit protein uL6 from Thermococcus onnurineus (strain NA1).